We begin with the raw amino-acid sequence, 374 residues long: Alginate lyase (374 aa).

The signal sequence occupies residues 1 to 26 (MRNPKLKNLLAPTLLSLAMFAGATQA). Substrate contacts are provided by residues 67-68 (SK), 140-141 (HT), and Y258.

The protein belongs to the polysaccharide lyase 5 family.

The protein localises to the periplasm. It catalyses the reaction Eliminative cleavage of alginate to give oligosaccharides with 4-deoxy-alpha-L-erythro-hex-4-enuronosyl groups at their non-reducing ends and beta-D-mannuronate at their reducing end.. In terms of biological role, catalyzes the depolymerization of alginate by cleaving the beta-1,4 glycosidic bond between two adjacent sugar residues via a beta-elimination mechanism. May serve to degrade mislocalized alginate that is trapped in the periplasmic space. The sequence is that of Alginate lyase from Cobetia marina (Deleya marina).